Here is a 1128-residue protein sequence, read N- to C-terminus: Inactive phospholipase C-like protein 2 (1128 aa).

A disordered region spans residues 1 to 129 (MAECGRGAAG…KKTVSFSSMP (129 aa)). Alanine 2 carries the post-translational modification N-acetylalanine. Position 16 is a phosphoserine (serine 16). Residues 20-30 (ALGAKGALKAG) show a composition bias toward low complexity. Residues 31–43 (AGEGGGGGGGGRL) show a composition bias toward gly residues. Residue threonine 85 is modified to Phosphothreonine. A PH domain is found at 142 to 252 (NSMVEGSELK…WVTGLRYLIS (111 aa)). The region spanning 427–571 (QDMKQPLSHY…LKGKILIKAK (145 aa)) is the PI-PLC X-box domain. Threonine 585 carries the phosphothreonine modification. The PI-PLC Y-box domain occupies 619–735 (LSELVSICKS…GYVLRPAIMR (117 aa)). Positions 735–864 (REEVSFFSAN…TGYRHVPLQS (130 aa)) constitute a C2 domain. The tract at residues 1100 to 1128 (KPGTENSEAQKPRRSLEAIPEKASDENGD) is disordered. Over residues 1107–1128 (EAQKPRRSLEAIPEKASDENGD) the composition is skewed to basic and acidic residues. Phosphoserine is present on serine 1114.

In terms of tissue distribution, ubiquitously expressed, with a strong expression in skeletal muscle.

Its subcellular location is the cytoplasm. Functionally, may play an role in the regulation of Ins(1,4,5)P3 around the endoplasmic reticulum. The polypeptide is Inactive phospholipase C-like protein 2 (Plcl2) (Mus musculus (Mouse)).